We begin with the raw amino-acid sequence, 322 residues long: tRNA U34 carboxymethyltransferase (322 aa).

Residues K91, W105, K110, G129, M195, Y199, and R314 each coordinate carboxy-S-adenosyl-L-methionine.

Belongs to the class I-like SAM-binding methyltransferase superfamily. CmoB family. Homotetramer.

The catalysed reaction is carboxy-S-adenosyl-L-methionine + 5-hydroxyuridine(34) in tRNA = 5-carboxymethoxyuridine(34) in tRNA + S-adenosyl-L-homocysteine + H(+). In terms of biological role, catalyzes carboxymethyl transfer from carboxy-S-adenosyl-L-methionine (Cx-SAM) to 5-hydroxyuridine (ho5U) to form 5-carboxymethoxyuridine (cmo5U) at position 34 in tRNAs. The polypeptide is tRNA U34 carboxymethyltransferase (Ectopseudomonas mendocina (strain ymp) (Pseudomonas mendocina)).